The primary structure comprises 115 residues: Photosystem II reaction center Psb28 protein (115 aa).

Belongs to the Psb28 family. In terms of assembly, part of the photosystem II complex.

Its subcellular location is the plastid. The protein resides in the chloroplast thylakoid membrane. This chain is Photosystem II reaction center Psb28 protein, found in Pyropia yezoensis (Susabi-nori).